The primary structure comprises 243 residues: NAD-dependent protein deacetylase (243 aa).

The 243-residue stretch at 1–243 (MRNDLETLKH…VSVVKSLMTE (243 aa)) folds into the Deacetylase sirtuin-type domain. The NAD(+) site is built by Ala-24, Phe-35, Arg-36, Gln-105, Ile-107, Asp-108, and His-123. Phe-35 contributes to the nicotinamide binding site. Positions 107 and 108 each coordinate nicotinamide. The active-site Proton acceptor is the His-123. Residues Cys-131, Cys-134, Cys-151, and Cys-154 each contribute to the Zn(2+) site. 4 residues coordinate NAD(+): Ser-192, Ser-193, Asn-215, and Asp-232.

It belongs to the sirtuin family. Class U subfamily. The cofactor is Zn(2+).

It localises to the cytoplasm. It carries out the reaction N(6)-acetyl-L-lysyl-[protein] + NAD(+) + H2O = 2''-O-acetyl-ADP-D-ribose + nicotinamide + L-lysyl-[protein]. In terms of biological role, NAD-dependent protein deacetylase which modulates the activities of several enzymes which are inactive in their acetylated form. The chain is NAD-dependent protein deacetylase from Staphylococcus aureus (strain Mu50 / ATCC 700699).